A 43-amino-acid polypeptide reads, in one-letter code: Omega-agatoxin-Aa3c (43 aa).

Disulfide bonds link Cys-2–Cys-19, Cys-9–Cys-25, and Cys-27–Cys-38.

Belongs to the neurotoxin 04 (omega-agtx) family. 03 (type II/III omega-agtx) subfamily. In terms of tissue distribution, expressed by the venom gland.

The protein localises to the secreted. Omega-agatoxins are antagonists of voltage-gated calcium channels (Cav). This is Omega-agatoxin-Aa3c from Agelenopsis aperta (North American funnel-web spider).